The primary structure comprises 390 residues: MGCSWLSCHRREATEVDGEIAAIDNVKIYKYREIRQATDDFSAENKIGEGGFGSVYKGCLKDGKLAAIKVLSAESRQGVKEFLTEINVISEIQHENLVKLYGCCVEGNHRILVYNFLENNSLDKTLLAGGYTRSGIQFDWSSRANICVGVAKGLAFLHEEVRPHIIHRDIKASNILLDKYLSPKISDFGLARLMPPNMTHVSTRVAGTIGYLAPEYAVRGQLTRKADIYSFGVLLMEIVSGRSNKNTRLPTEYQYLLERAWELYERNELVDLVDSGLNGVFDAEEACRYLKIGLLCTQDSPKLRPSMSTVVRLLTGEKDIDYKKISRPGLISDFMDLKVRGPVATKTEQVNRQNYTNPSSSSNGSSRDHSNAYSSGASSANAGNTFSSTI.

The region spanning 41 to 320 is the Protein kinase domain; the sequence is FSAENKIGEG…VRLLTGEKDI (280 aa). ATP is bound by residues 47 to 55 and lysine 69; that span reads IGEGGFGSV. At tyrosine 114 the chain carries Phosphotyrosine. The Proton acceptor role is filled by aspartate 169. 2 positions are modified to phosphoserine: serine 173 and serine 202. Phosphothreonine occurs at positions 203 and 208. The residue at position 216 (tyrosine 216) is a Phosphotyrosine. The disordered stretch occupies residues 345 to 390; the sequence is TKTEQVNRQNYTNPSSSSNGSSRDHSNAYSSGASSANAGNTFSSTI. The span at 354–390 shows a compositional bias: low complexity; it reads NYTNPSSSSNGSSRDHSNAYSSGASSANAGNTFSSTI.

This sequence belongs to the protein kinase superfamily. Ser/Thr protein kinase family. As to quaternary structure, interacts with and phosphorylates 14-3-3 proteins. Binds to GRF6 at the plasma membrane. In terms of processing, autophosphorylated.

The protein resides in the cell membrane. The catalysed reaction is L-seryl-[protein] + ATP = O-phospho-L-seryl-[protein] + ADP + H(+). The enzyme catalyses L-threonyl-[protein] + ATP = O-phospho-L-threonyl-[protein] + ADP + H(+). Activated by cold. In terms of biological role, negative regulator of freezing tolerance that phosphorylates 14-3-3 proteins (e.g. GRF6) thus triggering their translocation from the cytosol to the nucleus in response to cold stress. The polypeptide is Cold-responsive protein kinase 1 (Arabidopsis thaliana (Mouse-ear cress)).